The chain runs to 360 residues: Cinnamyl alcohol dehydrogenase 2 (360 aa).

Positions 23 to 351 constitute an Enoyl reductase (ER) domain; sequence GVLSPFNFSR…KADVKYRFVI (329 aa). Cys50 lines the Zn(2+) pocket. Position 52 (Ser52) interacts with an alcohol. Ser52 contributes to the NADP(+) binding site. Zn(2+) contacts are provided by Asp53, His72, Glu73, Cys103, Cys106, Cys109, Cys117, and Cys166. His72 is a binding site for an alcohol. NADP(+) is bound by residues Leu192, Gly194, Leu195, Ser214, Thr215, Ser216, Lys219, Lys220, Val277, Ala279, Ser301, and Arg348.

It belongs to the zinc-containing alcohol dehydrogenase family. Class-P subfamily. As to quaternary structure, homodimer. Zn(2+) serves as cofactor. In terms of tissue distribution, mainly expressed in young roots and, to a lower extent, in stems and leaves.

It is found in the cytoplasm. It catalyses the reaction (E)-cinnamyl alcohol + NADP(+) = (E)-cinnamaldehyde + NADPH + H(+). Functionally, alcohol dehydrogenase that catalyzes the conversion of (E)-cinnamyl alcohol to (E)-cinnamaldehyde. In Rauvolfia serpentina (Serpentine wood), this protein is Cinnamyl alcohol dehydrogenase 2.